The chain runs to 219 residues: Protein matrimony (219 aa).

Residues 74-99 show a composition bias toward basic residues; it reads PPAKAHPHPHQHQHHHHHHKHIHRTQ. The interval 74-104 is disordered; the sequence is PPAKAHPHPHQHQHHHHHHKHIHRTQLKPPP. An SAM domain is found at 159-219; that stretch reads NHAANVEQIL…NRIMDVLQTL (61 aa).

In terms of assembly, interacts with polo. Interacts with cort. Post-translationally, probably ubiquitinated: degraded during the oocyte-to-embryo transition by the anaphase promoting complex/cyclosome (APC/C) containing cort protein.

Its subcellular location is the nucleus. It is found in the chromosome. Functionally, polo kinase inhibitor required to maintain G2 arrest in the meiotic cell cycle in females. Holds heterochromatically paired homologs together from the end of pachytene until metaphase I. Haploinsufficient locus for homologous achiasmate segregation and may be required for the maintenance of heterochromatic pairings. This chain is Protein matrimony (mtrm), found in Drosophila yakuba (Fruit fly).